The chain runs to 662 residues: PAN2-PAN3 deadenylation complex subunit PAN3 (662 aa).

Disordered regions lie at residues 1-26 (MASAGKPTLDDSRRATGSPKMKAREN) and 59-131 (TTYQ…RAET). A C3H1-type zinc finger spans residues 26-55 (NAKDTLCRNVTIYGRCRYEDKGCAFNHDPH). Over residues 72–85 (DSPSFTPSLLSSNG) the composition is skewed to polar residues. A compositionally biased stretch (low complexity) spans 86 to 102 (SSPTTASVTAKKAATIS). The segment covering 114–126 (RNITSRSNTSTPS) has biased composition (polar residues). Residues 265-525 (QTLPNTQLPA…NIDIFITGIS (261 aa)) form a pseudokinase domain region. ATP-binding positions include arginine 317, 366-373 (DYHPLSKT), and 425-426 (SK). A coiled-coil region spans residues 526–564 (SQLMSTFDSALHLDDELTSDLSRELENGRLVRLVTKLNF). A knob domain region spans residues 565-662 (VNERPEYEHD…ALLKPTRRLH (98 aa)).

It belongs to the protein kinase superfamily. PAN3 family. As to quaternary structure, homodimer. Forms a heterotrimer with a catalytic subunit pan2 to form the poly(A)-nuclease (PAN) deadenylation complex. Interacts (via PAM-2 motif) with poly(A)-binding protein pab1 (via PABC domain), conferring substrate specificity of the enzyme complex.

The protein localises to the cytoplasm. Its function is as follows. Regulatory subunit of the poly(A)-nuclease (PAN) deadenylation complex, one of two cytoplasmic mRNA deadenylases involved in mRNA turnover. PAN specifically shortens poly(A) tails of RNA and the activity is stimulated by poly(A)-binding protein pab1. PAN deadenylation is followed by rapid degradation of the shortened mRNA tails by the CCR4-NOT complex. Deadenylated mRNAs are then degraded by two alternative mechanisms, namely exosome-mediated 3'-5' exonucleolytic degradation, or deadenylation-dependent mRNA decaping and subsequent 5'-3' exonucleolytic degradation by xrn1. May also be involved in post-transcriptional maturation of mRNA poly(A) tails. pan3 acts as a positive regulator for PAN activity, recruiting the catalytic subunit pan2 to mRNA via its interaction with RNA and with pab1. In Aspergillus oryzae (strain ATCC 42149 / RIB 40) (Yellow koji mold), this protein is PAN2-PAN3 deadenylation complex subunit PAN3.